A 238-amino-acid chain; its full sequence is tRNA1(Val) (adenine(37)-N6)-methyltransferase (238 aa).

This sequence belongs to the methyltransferase superfamily. tRNA (adenine-N(6)-)-methyltransferase family.

It localises to the cytoplasm. The catalysed reaction is adenosine(37) in tRNA1(Val) + S-adenosyl-L-methionine = N(6)-methyladenosine(37) in tRNA1(Val) + S-adenosyl-L-homocysteine + H(+). In terms of biological role, specifically methylates the adenine in position 37 of tRNA(1)(Val) (anticodon cmo5UAC). This chain is tRNA1(Val) (adenine(37)-N6)-methyltransferase, found in Cytophaga hutchinsonii (strain ATCC 33406 / DSM 1761 / CIP 103989 / NBRC 15051 / NCIMB 9469 / D465).